We begin with the raw amino-acid sequence, 40 residues long: Large ribosomal subunit protein bL36 (40 aa).

It belongs to the bacterial ribosomal protein bL36 family.

The chain is Large ribosomal subunit protein bL36 from Corynebacterium glutamicum (strain R).